Consider the following 189-residue polypeptide: ComE operon protein 2 (189 aa).

The CMP/dCMP-type deaminase domain occupies 5–132 (SWNQYFMAQS…PYAQELFEQA (128 aa)). Position 70 (histidine 70) interacts with Zn(2+). Glutamate 72 serves as the catalytic Proton donor. Residues cysteine 98 and cysteine 101 each contribute to the Zn(2+) site.

This sequence belongs to the cytidine and deoxycytidylate deaminase family. Zn(2+) serves as cofactor.

Its function is as follows. Dispensable for transformability. This chain is ComE operon protein 2 (comEB), found in Bacillus subtilis (strain 168).